A 284-amino-acid polypeptide reads, in one-letter code: Elongation factor Ts (284 aa).

An involved in Mg(2+) ion dislocation from EF-Tu region spans residues T80 to V83.

This sequence belongs to the EF-Ts family.

The protein localises to the cytoplasm. In terms of biological role, associates with the EF-Tu.GDP complex and induces the exchange of GDP to GTP. It remains bound to the aminoacyl-tRNA.EF-Tu.GTP complex up to the GTP hydrolysis stage on the ribosome. The sequence is that of Elongation factor Ts from Neisseria gonorrhoeae (strain ATCC 700825 / FA 1090).